We begin with the raw amino-acid sequence, 134 residues long: Two-component response regulator ORR5 (134 aa).

The 118-residue stretch at 16–133 (HVLAVDDSSV…DVSRLCSRVL (118 aa)) folds into the Response regulatory domain. Position 66 is a 4-aspartylphosphate (Asp-66).

This sequence belongs to the ARR family. Type-A subfamily. In terms of processing, two-component system major event consists of a His-to-Asp phosphorelay between a sensor histidine kinase (HK) and a response regulator (RR). In plants, the His-to-Asp phosphorelay involves an additional intermediate named Histidine-containing phosphotransfer protein (HPt). This multistep phosphorelay consists of a His-Asp-His-Asp sequential transfer of a phosphate group between first a His and an Asp of the HK protein, followed by the transfer to a conserved His of the HPt protein and finally the transfer to an Asp in the receiver domain of the RR protein. Expressed in mature leaves and shoots, and at low levels in roots and flowers.

Its function is as follows. Functions as a response regulator involved in His-to-Asp phosphorelay signal transduction system. Phosphorylation of the Asp residue in the receiver domain activates the ability of the protein to promote the transcription of target genes. Type-A response regulators seem to act as negative regulators of the cytokinin signaling. This Oryza sativa subsp. indica (Rice) protein is Two-component response regulator ORR5.